Reading from the N-terminus, the 76-residue chain is Acyl carrier protein (76 aa).

A Carrier domain is found at 2-76; it reads SNIEERVIKV…QSAIDFVKSR (75 aa). S37 bears the O-(pantetheine 4'-phosphoryl)serine mark.

The protein belongs to the acyl carrier protein (ACP) family. 4'-phosphopantetheine is transferred from CoA to a specific serine of apo-ACP by AcpS. This modification is essential for activity because fatty acids are bound in thioester linkage to the sulfhydryl of the prosthetic group.

The protein localises to the cytoplasm. Its pathway is lipid metabolism; fatty acid biosynthesis. Functionally, carrier of the growing fatty acid chain in fatty acid biosynthesis. The polypeptide is Acyl carrier protein (Dichelobacter nodosus (strain VCS1703A)).